A 295-amino-acid polypeptide reads, in one-letter code: MNTILGSDTVKRGMAQMQKGGVIMDVVNAEQARIAEAAGAVAVMALERVPSDIRAAGGVARMANPKIVKEVMNAVSIPVMAKARIGHITEARVLEAMGVDYIDESEVLTPADDEFHLLKCEFTVPFVCGCRDLGEALRRIGEGASMLRTKGEPGTGNIVEAVRHIRKVNAQIRKVVAMNHDELMTEAKNLSAPFELLLQIKALGKLPVVNFAAGGVATPADAALMMELGADGVFVGSGIFKSEHPEKFAKAIVQATTHYQDYDLIARLSEELGEPMKGIEISRLQQHERMQERGW.

Aspartate 25 is a binding site for D-ribose 5-phosphate. The Schiff-base intermediate with D-ribose 5-phosphate role is filled by lysine 82. Glycine 154 is a binding site for D-ribose 5-phosphate. Residue arginine 166 coordinates D-glyceraldehyde 3-phosphate. D-ribose 5-phosphate-binding positions include glycine 215 and 236-237; that span reads GS.

The protein belongs to the PdxS/SNZ family. In terms of assembly, in the presence of PdxT, forms a dodecamer of heterodimers.

The catalysed reaction is aldehydo-D-ribose 5-phosphate + D-glyceraldehyde 3-phosphate + L-glutamine = pyridoxal 5'-phosphate + L-glutamate + phosphate + 3 H2O + H(+). It participates in cofactor biosynthesis; pyridoxal 5'-phosphate biosynthesis. Functionally, catalyzes the formation of pyridoxal 5'-phosphate from ribose 5-phosphate (RBP), glyceraldehyde 3-phosphate (G3P) and ammonia. The ammonia is provided by the PdxT subunit. Can also use ribulose 5-phosphate and dihydroxyacetone phosphate as substrates, resulting from enzyme-catalyzed isomerization of RBP and G3P, respectively. The polypeptide is Pyridoxal 5'-phosphate synthase subunit PdxS (Pasteurella multocida (strain Pm70)).